We begin with the raw amino-acid sequence, 135 residues long: Large ribosomal subunit protein uL16 (135 aa).

Belongs to the universal ribosomal protein uL16 family. As to quaternary structure, part of the 50S ribosomal subunit.

Its function is as follows. Binds 23S rRNA and is also seen to make contacts with the A and possibly P site tRNAs. The protein is Large ribosomal subunit protein uL16 of Desulforapulum autotrophicum (strain ATCC 43914 / DSM 3382 / VKM B-1955 / HRM2) (Desulfobacterium autotrophicum).